A 494-amino-acid chain; its full sequence is Cobyric acid synthase (494 aa).

In terms of domain architecture, GATase cobBQ-type spans 254–453 (KQTVAVIAYP…LHGLFEDPGA (200 aa)). Cysteine 338 (nucleophile) is an active-site residue. Residue histidine 445 is part of the active site.

Belongs to the CobB/CobQ family. CobQ subfamily.

It participates in cofactor biosynthesis; adenosylcobalamin biosynthesis. Its function is as follows. Catalyzes amidations at positions B, D, E, and G on adenosylcobyrinic A,C-diamide. NH(2) groups are provided by glutamine, and one molecule of ATP is hydrogenolyzed for each amidation. The polypeptide is Cobyric acid synthase (Albidiferax ferrireducens (strain ATCC BAA-621 / DSM 15236 / T118) (Rhodoferax ferrireducens)).